The primary structure comprises 241 residues: Probable cobalt-factor III C(17)-methyltransferase (241 aa).

Belongs to the precorrin methyltransferase family.

The enzyme catalyses Co(II)-factor III + S-adenosyl-L-methionine + H(+) = Co(II)-factor IV + S-adenosyl-L-homocysteine. Its pathway is cofactor biosynthesis; adenosylcobalamin biosynthesis; cob(II)yrinate a,c-diamide from sirohydrochlorin (anaerobic route): step 3/10. Methyltransferase that likely catalyzes the ring contraction and methylation of C-17 in cobalt-factor III to form cobalt-factor IV. May also convert cobalt-precorrin-3 to cobalt-precorrin-4. The chain is Probable cobalt-factor III C(17)-methyltransferase (cbiH) from Salmonella typhimurium (strain LT2 / SGSC1412 / ATCC 700720).